We begin with the raw amino-acid sequence, 539 residues long: Ell-associated factor Eaf (539 aa).

Residues 119–539 (TRSEMTHHKP…SSNSSDDDDD (421 aa)) are disordered. Over residues 132 to 146 (PATNINHNNIPMSTN) the composition is skewed to polar residues. The segment covering 151-163 (GPGPGPGSGPSPP) has biased composition (pro residues). The segment covering 174 to 195 (KLENSTMRISSKTKVSTGSRRN) has biased composition (polar residues). S205 bears the Phosphoserine mark. Residues 220–238 (RSPQSAPAWNANNAQQTLP) show a composition bias toward polar residues. Low complexity-rich tracts occupy residues 267–278 (SGSSTGSSTGQP), 309–337 (MHQN…YGRG), and 345–375 (NNYA…SHHS). A compositionally biased stretch (acidic residues) spans 420–435 (DSSDSDSGSESDDSTD). Low complexity-rich tracts occupy residues 461–493 (HQQL…QPQQ) and 520–533 (NDLL…SSNS).

This sequence belongs to the EAF family.

It is found in the nucleus. In terms of biological role, promotes transcriptional elongation by Su(Tpl)/ELL. Essential for development. The protein is Ell-associated factor Eaf of Drosophila willistoni (Fruit fly).